Reading from the N-terminus, the 71-residue chain is Translation initiation factor IF-1 (71 aa).

The S1-like domain occupies 1–71 (MANDVIEIEG…TKGRITYRFR (71 aa)).

Belongs to the IF-1 family. Component of the 30S ribosomal translation pre-initiation complex which assembles on the 30S ribosome in the order IF-2 and IF-3, IF-1 and N-formylmethionyl-tRNA(fMet); mRNA recruitment can occur at any time during PIC assembly.

The protein resides in the cytoplasm. Its function is as follows. One of the essential components for the initiation of protein synthesis. Stabilizes the binding of IF-2 and IF-3 on the 30S subunit to which N-formylmethionyl-tRNA(fMet) subsequently binds. Helps modulate mRNA selection, yielding the 30S pre-initiation complex (PIC). Upon addition of the 50S ribosomal subunit IF-1, IF-2 and IF-3 are released leaving the mature 70S translation initiation complex. The sequence is that of Translation initiation factor IF-1 from Leuconostoc mesenteroides subsp. mesenteroides (strain ATCC 8293 / DSM 20343 / BCRC 11652 / CCM 1803 / JCM 6124 / NCDO 523 / NBRC 100496 / NCIMB 8023 / NCTC 12954 / NRRL B-1118 / 37Y).